The primary structure comprises 80 residues: RNA-binding protein Hfq (80 aa).

The Sm domain occupies 10–70 (DLFLNTVRKQ…ISTIMPGQPM (61 aa)).

This sequence belongs to the Hfq family. In terms of assembly, homohexamer.

Its function is as follows. RNA chaperone that binds small regulatory RNA (sRNAs) and mRNAs to facilitate mRNA translational regulation in response to envelope stress, environmental stress and changes in metabolite concentrations. Also binds with high specificity to tRNAs. This Agrobacterium fabrum (strain C58 / ATCC 33970) (Agrobacterium tumefaciens (strain C58)) protein is RNA-binding protein Hfq.